Reading from the N-terminus, the 175-residue chain is Ribosome maturation factor RimM (175 aa).

A PRC barrel domain is found at 97 to 175 (EGEFYWHQLE…RMVVDWDPEF (79 aa)).

Belongs to the RimM family. In terms of assembly, binds ribosomal protein uS19.

The protein resides in the cytoplasm. An accessory protein needed during the final step in the assembly of 30S ribosomal subunit, possibly for assembly of the head region. Essential for efficient processing of 16S rRNA. May be needed both before and after RbfA during the maturation of 16S rRNA. It has affinity for free ribosomal 30S subunits but not for 70S ribosomes. This Marinobacter nauticus (strain ATCC 700491 / DSM 11845 / VT8) (Marinobacter aquaeolei) protein is Ribosome maturation factor RimM.